The following is a 260-amino-acid chain: POLG alternative reading frame (260 aa).

2 disordered regions span residues 1–50 (MEPK…LRPR) and 108–219 (ARRG…RRGG). Low complexity-rich tracts occupy residues 36–48 (AGSSSGALGLQLR), 116–154 (GRGAPQRRAPAEARALGAASRALARRGAAPAAPLRGQPG), and 164–186 (AEPALPGGGQLAVAGPAAPEAPG). The tract at residues 104 to 130 (ANLRARRGDAWRGRGAPQRRAPAEARA) is required for nucleolar localization. 2 stretches are compositionally biased toward gly residues: residues 187–199 (LGLGGGLDPVRPR) and 209–219 (RGAGPGVRRGG).

In terms of assembly, interacts with C1QBP; the interaction results in nucleolar localization of C1QBP, probably due to prevention of C1QBP maturation and redirection from mitochondria to nucleoli. In terms of processing, undergoes proteolytic cleavage to produce a secreted C-terminal fragment.

The protein resides in the nucleus. It is found in the nucleolus. Its subcellular location is the secreted. This chain is POLG alternative reading frame, found in Homo sapiens (Human).